A 312-amino-acid polypeptide reads, in one-letter code: HTH-type transcriptional regulator PtxR (312 aa).

In terms of domain architecture, HTH lysR-type spans 11-68 (LNLNHLYAFVAVAEHNSFTAAAEALGLSKSLLSEQLRRLEADLGIQLLTRTTRRMTLT). Positions 28 to 47 (FTAAAEALGLSKSLLSEQLR) form a DNA-binding region, H-T-H motif.

Belongs to the LysR transcriptional regulatory family. In terms of assembly, monomer in solution. May dimerize on binding to DNA. Interacts with PtxS in the absence of 2-ketogluconate. Binding of the 2-ketogluconate effector to PtxS causes PtxS/PtxR complex dissociation.

With respect to regulation, negatively regulated by PtxS, which interacts with PtxR and prevents its activity. Plays an important role in the regulation of the production of the virulence factor exotoxin A (toxA), via positive regulation of the transcription of the toxA gene. Acts by binding directly to the toxA promoter region. Besides toxA, PtxR modulates the expression of genes that code for the QS-controlled virulence factors. It negatively regulates the expression of the rhamnolipid and pyocyanine genes, through the autoinducer synthase RhlI, and the PQS synthesis operon pqsABCDE, while it positively regulates the expression of lasB through the autoinducer synthase LasI. Also positively regulates the expression of the exotoxin A regulatory protein (toxR or regA). Its function is as follows. In addition, is involved in the positive regulation of glucose metabolism via the regulation of the expression of the kgu and gad operons. Acts by binding directly to the promoter region of the kgu and gad operons. The chain is HTH-type transcriptional regulator PtxR from Pseudomonas aeruginosa (strain ATCC 15692 / DSM 22644 / CIP 104116 / JCM 14847 / LMG 12228 / 1C / PRS 101 / PAO1).